Consider the following 423-residue polypeptide: Cyclin-dependent kinase 14 (423 aa).

Residues Ser-32, Ser-49, and Ser-88 each carry the phosphoserine modification. Positions 49 to 64 (SENNACINFKTSSTGK) are enriched in polar residues. A disordered region spans residues 49-87 (SENNACINFKTSSTGKESPKVRRHSSPSSPTSPKFGKAD). The Protein kinase domain occupies 89 to 373 (YEKLEKLGEG…AQAALSHEYF (285 aa)). Residues 95–103 (LGEGSYATV) and Lys-118 contribute to the ATP site. Asp-210 functions as the Proton acceptor in the catalytic mechanism. The segment at 403–423 (ESMRAFGKNNSYGKSLSNSKH) is disordered. A compositionally biased stretch (polar residues) spans 410-423 (KNNSYGKSLSNSKH).

This sequence belongs to the protein kinase superfamily. CMGC Ser/Thr protein kinase family. CDC2/CDKX subfamily. As to quaternary structure, found in a complex with LRP6, CCNY and CAPRIN2 during G2/M stage; CAPRIN2 functions as a scaffold for the complex by binding to CCNY via its N terminus and to CDK14 via its C terminus. Interacts with CCNY; CCNY mediates its recruitment to the plasma membrane and promotes phosphorylation of LRP6. Interacts with CCDN3 and CDKN1A. Interacts with SEPT8. Interacts with 14-3-3 proteina YWHAB, YWHAE, YWHAH and YWHAQ.

It localises to the cell membrane. Its subcellular location is the cytoplasm. The protein localises to the nucleus. The catalysed reaction is L-seryl-[protein] + ATP = O-phospho-L-seryl-[protein] + ADP + H(+). The enzyme catalyses L-threonyl-[protein] + ATP = O-phospho-L-threonyl-[protein] + ADP + H(+). With respect to regulation, serine/threonine-protein kinase activity is promoted by associated cyclins CCDN3 and CCNY and repressed by CDKN1A. Functionally, serine/threonine-protein kinase involved in the control of the eukaryotic cell cycle, whose activity is controlled by an associated cyclin. Acts as a cell-cycle regulator of Wnt signaling pathway during G2/M phase by mediating the phosphorylation of LRP6 at 'Ser-1490', leading to the activation of the Wnt signaling pathway. Acts as a regulator of cell cycle progression and cell proliferation via its interaction with CCDN3. Phosphorylates RB1 in vitro, however the relevance of such result remains to be confirmed in vivo. May also play a role in meiosis, neuron differentiation and may indirectly act as a negative regulator of insulin-responsive glucose transport. The chain is Cyclin-dependent kinase 14 (CDK14) from Callithrix jacchus (White-tufted-ear marmoset).